The chain runs to 491 residues: Sterol 14-alpha demethylase (491 aa).

Residues leucine 20–valine 40 form a helical membrane-spanning segment. Heme is bound at residue cysteine 430.

This sequence belongs to the cytochrome P450 family. Heme serves as cofactor.

The protein localises to the endoplasmic reticulum membrane. It carries out the reaction a 14alpha-methyl steroid + 3 reduced [NADPH--hemoprotein reductase] + 3 O2 = a Delta(14) steroid + formate + 3 oxidized [NADPH--hemoprotein reductase] + 4 H2O + 4 H(+). The enzyme catalyses a 14alpha-methyl steroid + reduced [NADPH--hemoprotein reductase] + O2 = a 14alpha-hydroxymethyl steroid + oxidized [NADPH--hemoprotein reductase] + H2O + H(+). The catalysed reaction is a 14alpha-hydroxymethyl steroid + reduced [NADPH--hemoprotein reductase] + O2 = a 14alpha-formyl steroid + oxidized [NADPH--hemoprotein reductase] + 2 H2O + H(+). It catalyses the reaction a 14alpha-formyl steroid + reduced [NADPH--hemoprotein reductase] + O2 = a Delta(14) steroid + formate + oxidized [NADPH--hemoprotein reductase] + H2O + 2 H(+). It carries out the reaction lanosterol + 3 reduced [NADPH--hemoprotein reductase] + 3 O2 = 4,4-dimethyl-5alpha-cholesta-8,14,24-trien-3beta-ol + formate + 3 oxidized [NADPH--hemoprotein reductase] + 4 H2O + 4 H(+). The enzyme catalyses lanosterol + reduced [NADPH--hemoprotein reductase] + O2 = 32-hydroxylanosterol + oxidized [NADPH--hemoprotein reductase] + H2O + H(+). The catalysed reaction is 32-hydroxylanosterol + reduced [NADPH--hemoprotein reductase] + O2 = 32-oxolanosterol + oxidized [NADPH--hemoprotein reductase] + 2 H2O + H(+). It catalyses the reaction 32-oxolanosterol + reduced [NADPH--hemoprotein reductase] + O2 = 4,4-dimethyl-5alpha-cholesta-8,14,24-trien-3beta-ol + formate + oxidized [NADPH--hemoprotein reductase] + H2O + 2 H(+). It carries out the reaction eburicol + 3 reduced [NADPH--hemoprotein reductase] + 3 O2 = 14-demethyleburicol + formate + 3 oxidized [NADPH--hemoprotein reductase] + 4 H2O + 4 H(+). The enzyme catalyses eburicol + reduced [NADPH--hemoprotein reductase] + O2 = 32-hydroxyeburicol + oxidized [NADPH--hemoprotein reductase] + H2O + H(+). The catalysed reaction is 32-hydroxyeburicol + reduced [NADPH--hemoprotein reductase] + O2 = 32-oxoeburicol + oxidized [NADPH--hemoprotein reductase] + 2 H2O + H(+). It catalyses the reaction 32-oxoeburicol + reduced [NADPH--hemoprotein reductase] + O2 = 14-demethyleburicol + formate + oxidized [NADPH--hemoprotein reductase] + H2O + 2 H(+). The protein operates within steroid biosynthesis; sterol biosynthesis. Functionally, sterol 14alpha-demethylase, encoded by cyp51A, cyp51B and cyp51C, that plays a critical role in the third module of ergosterol biosynthesis pathway, being ergosterol the major sterol component in fungal membranes that participates in a variety of functions. The third module or late pathway involves the ergosterol synthesis itself through consecutive reactions that mainly occur in the endoplasmic reticulum (ER) membrane. In filamentous fungi, during the initial step of this module, lanosterol (lanosta-8,24-dien-3beta-ol) can be metabolized to eburicol. Sterol 14alpha-demethylase catalyzes the three-step oxidative removal of the 14alpha-methyl group (C-32) of both these sterols in the form of formate, and converts eburicol and lanosterol to 14-demethyleburicol (4,4,24-trimethylergosta-8,14,24(28)-trienol) and 4,4-dimethyl-5alpha-cholesta-8,14,24-trien-3beta-ol, respectively, which are further metabolized by other enzymes in the pathway to ergosterol. Can also use substrates not intrinsic to fungi, such as 24,25-dihydrolanosterol (DHL), producing 4,4'-dimethyl-8,14-cholestadien-3-beta-ol, but at lower rates than the endogenous substrates. Its function is as follows. As a target of azole drugs, plays a crucial role in azole susceptibility. The sequence is that of Sterol 14-alpha demethylase from Aspergillus flavus (strain ATCC 200026 / FGSC A1120 / IAM 13836 / NRRL 3357 / JCM 12722 / SRRC 167).